Here is a 365-residue protein sequence, read N- to C-terminus: Isopentenyl-diphosphate delta-isomerase (365 aa).

Arginine 8–lysine 9 is a substrate binding site. Residues serine 67–threonine 69, serine 97, and asparagine 126 each bind FMN. Serine 97 to arginine 99 contributes to the substrate binding site. Glutamine 160 provides a ligand contact to substrate. Glutamate 161 provides a ligand contact to Mg(2+). FMN is bound by residues lysine 192, threonine 222, glycine 272–arginine 274, and alanine 293–leucine 294.

The protein belongs to the IPP isomerase type 2 family. As to quaternary structure, homooctamer. Dimer of tetramers. The cofactor is FMN. NADPH serves as cofactor. It depends on Mg(2+) as a cofactor.

The protein resides in the cytoplasm. It catalyses the reaction isopentenyl diphosphate = dimethylallyl diphosphate. Functionally, involved in the biosynthesis of isoprenoids. Catalyzes the 1,3-allylic rearrangement of the homoallylic substrate isopentenyl (IPP) to its allylic isomer, dimethylallyl diphosphate (DMAPP). This chain is Isopentenyl-diphosphate delta-isomerase, found in Methanosarcina mazei (strain ATCC BAA-159 / DSM 3647 / Goe1 / Go1 / JCM 11833 / OCM 88) (Methanosarcina frisia).